Here is a 540-residue protein sequence, read N- to C-terminus: DNA-(apurinic or apyrimidinic site) endonuclease (540 aa).

Positions 206 and 239 each coordinate Mg(2+). The interval 256 to 276 (NNKVYGGKKNEGEERNRGSVK) is disordered. Over residues 263 to 276 (KKNEGEERNRGSVK) the composition is skewed to basic and acidic residues. Residues Asp-400, Asn-402, Asp-530, and His-531 each coordinate Mg(2+). Residue His-531 is the Proton acceptor of the active site.

The protein belongs to the DNA repair enzymes AP/ExoA family. Requires Mg(2+) as cofactor. It depends on Mn(2+) as a cofactor. In terms of processing, may be proteolytically cleaved.

It is found in the mitochondrion. The enzyme catalyses Exonucleolytic cleavage in the 3'- to 5'-direction to yield nucleoside 5'-phosphates.. Multifunctional protein that plays a central role in mitochondrial DNA base excision repair pathway induced by oxidative stress. Has apurinic/apyrimidinic (AP) endonuclease activity towards double-stranded DNA (dsDNA). Has nucleotide incision repair (NIR) activity; acts on dsDNA with oxidized bases thymine glycol and 5,6-dihydro-2'-deoxyuridine. Has 3'-5' exonuclease; can use dsDNA templates with 3'-OH termini including blunt-end, gapped and mismatched 3'-recessed. Has 3'-phosphatase activity; cleaves 3'-phosphate from blunt, recessed and gapped dsDNA templates, followed by 3'-5' exonuclease activity. Has RNase H-like activity; cleaves RNA on 3'-recessed RNA-DNA duplex. Plays a role in merosome infection of host erythrocytes. This is DNA-(apurinic or apyrimidinic site) endonuclease from Plasmodium berghei (strain Anka).